A 170-amino-acid polypeptide reads, in one-letter code: Peptide deformylase (170 aa).

Fe cation contacts are provided by C91 and H133. The active site involves E134. Position 137 (H137) interacts with Fe cation.

The protein belongs to the polypeptide deformylase family. The cofactor is Fe(2+).

The catalysed reaction is N-terminal N-formyl-L-methionyl-[peptide] + H2O = N-terminal L-methionyl-[peptide] + formate. In terms of biological role, removes the formyl group from the N-terminal Met of newly synthesized proteins. Requires at least a dipeptide for an efficient rate of reaction. N-terminal L-methionine is a prerequisite for activity but the enzyme has broad specificity at other positions. The chain is Peptide deformylase from Actinobacillus pleuropneumoniae serotype 7 (strain AP76).